The chain runs to 1448 residues: Glutamate receptor ionotropic, NMDA 2B (1448 aa).

Positions 1-24 are cleaved as a signal peptide; that stretch reads MRPTEACCYLKISLIILFYMGCYA. The Extracellular segment spans residues 25-554; it reads QKHPNMDIAV…SAFLEPFSAD (530 aa). Cys-81 and Cys-316 are joined by a disulfide. Positions 122 and 279 each coordinate Zn(2+). The N-linked (GlcNAc...) asparagine glycan is linked to Asn-336. 2 disulfides stabilise this stretch: Cys-426–Cys-453 and Cys-433–Cys-454. Positions 511 and 516 each coordinate L-glutamate. Residues 555–573 traverse the membrane as a helical segment; that stretch reads VWVMMFVMLLIVSAVAVFV. Over 574–600 the chain is Cytoplasmic; it reads FEYFSPVGYNRCLADGREPGGPSFTIG. The segment at residues 601-620 is an intramembrane region (discontinuously helical); it reads KAIWLLWGLVFNNSVPVQNP. The interval 601–620 is pore-forming; it reads KAIWLLWGLVFNNSVPVQNP. The Cytoplasmic segment spans residues 621–627; sequence KGTTSKI. Residues 628–643 form a helical membrane-spanning segment; that stretch reads MVSVWAFFAVIFLASY. At 644–819 the chain is on the extracellular side; that stretch reads TANLAAFMIQ…LDIDNMAGVF (176 aa). Asn-685 is a glycosylation site (N-linked (GlcNAc...) asparagine). L-glutamate contacts are provided by residues 687 to 688 and Asp-729; that span reads ST. A disulfide bridge links Cys-743 with Cys-798. A helical membrane pass occupies residues 820–839; sequence YMLAAAMALSLITFIMEHLF. Over 840–1448 the chain is Cytoplasmic; that stretch reads FWQLRHCFMG…EKLSSIESDV (609 aa). Residues 1254–1265 show a composition bias toward polar residues; that stretch reads APNSKYPQSPNG. Residues 1254-1277 are disordered; the sequence is APNSKYPQSPNGKAQKRNRSKLHR. The segment covering 1267–1277 has biased composition (basic residues); sequence AQKRNRSKLHR.

This sequence belongs to the glutamate-gated ion channel (TC 1.A.10.1) family. NR2B/GRIN2B subfamily. As to quaternary structure, heterotetramer. Forms heterotetrameric channels composed of two GluN1/zeta subunits (GRIN1), and two identical GluN2/epsilon subunits (GRIN2A, GRIN2B, GRIN2C or GRIN2D) or GluN3 subunits (GRIN3A or GRIN3B) (in vitro). In vivo, the subunit composition may depend on the expression levels of the different subunits. Detected in oocytes.

The protein localises to the cell membrane. It is found in the postsynaptic cell membrane. It catalyses the reaction Ca(2+)(in) = Ca(2+)(out). It carries out the reaction Na(+)(in) = Na(+)(out). The catalysed reaction is K(+)(in) = K(+)(out). In terms of biological role, component of N-methyl-D-aspartate (NMDA) receptors (NMDARs) that function as heterotetrameric, ligand-gated cation channels with high calcium permeability and voltage-dependent block by Mg(2+). Channel activation requires binding of the neurotransmitter L-glutamate to the GluN2 subunit, glycine binding to the GluN1 subunit, plus membrane depolarization to eliminate channel inhibition by Mg(2+). NMDARs mediate simultaneously the potasium efflux and the influx of calcium and sodium. Each GluN2 subunit confers differential attributes to channel properties, including activation, deactivation and desensitization kinetics, pH sensitivity, Ca2(+) permeability, and binding to allosteric modulators. The polypeptide is Glutamate receptor ionotropic, NMDA 2B (Xenopus laevis (African clawed frog)).